We begin with the raw amino-acid sequence, 164 residues long: LWamide neuropeptides (164 aa).

The propeptide occupies 1–6 (RSADAQ). The disordered stretch occupies residues 1 to 92 (RSADAQQHGL…WGRSADAQQP (92 aa)). A tryptophan amide mark is found at Trp-11 and Trp-20. The propeptide occupies 23–27 (SADAQ). A tryptophan amide mark is found at Trp-32 and Trp-41. A propeptide spanning residues 44 to 49 (SAEPGQ) is cleaved from the precursor. 2 positions are modified to tryptophan amide: Trp-53 and Trp-62. The propeptide occupies 65–70 (SAEPLQ). Trp-74 and Trp-83 each carry tryptophan amide. Positions 86–90 (SADAQ) are excised as a propeptide. A tryptophan amide mark is found at Trp-95, Trp-106, and Trp-115. The propeptide occupies 118 to 123 (SADPGQ). Trp-127 and Trp-137 each carry tryptophan amide. The propeptide occupies 140-164 (SYEPPQFEDLEDLKKKSAIPKPSEQ).

This sequence belongs to the LWamide neuropeptide family.

Its subcellular location is the secreted. Its function is as follows. Metamorphosin A may be part of an internal signaling system involved in control of metamorphosis. The protein is LWamide neuropeptides of Actinia equina (Beadlet anemone).